The following is a 456-amino-acid chain: Serine/threonine-protein kinase PBS1 (456 aa).

The segment at 1 to 57 (MGCFSCFDSSDDEKLNPVDESNHGQKKQSQPTVSNNISGLPSGGEKLSSKTNGGSKR) is disordered. Gly-2 carries the N-myristoyl glycine lipid modification. Residues Cys-3 and Cys-6 are each lipidated (S-palmitoyl cysteine). Positions 12-23 (DEKLNPVDESNH) are enriched in basic and acidic residues. Ser-21 carries the post-translational modification Phosphoserine. Polar residues predominate over residues 27–39 (KQSQPTVSNNISG). The region spanning 86–363 (FHPDTFLGEG…ADVVTALSYL (278 aa)) is the Protein kinase domain. ATP is bound by residues 92 to 100 (LGEGGFGRV) and Lys-115. At Tyr-160 the chain carries Phosphotyrosine. The active-site Proton acceptor is the Asp-213. Ser-217 and Ser-247 each carry phosphoserine. 2 positions are modified to phosphothreonine: Thr-248 and Thr-253. At Tyr-261 the chain carries Phosphotyrosine. Positions 292 to 296 (SEMPH) match the Recognition motif required for RPS5-mediated plant resistance to P.syringae motif. The segment at 368-456 (YDPSKDDSRR…QGTSESNSTG (89 aa)) is disordered. Basic and acidic residues-rich tracts occupy residues 370-392 (PSKD…RNDD) and 400-429 (FDLE…RAVA). Polar residues predominate over residues 446 to 456 (EQGTSESNSTG).

Belongs to the protein kinase superfamily. Ser/Thr protein kinase family. As to quaternary structure, in infected plant cells, it interacts with the P.syringae virulence protein avrPphB. In uninfected plants, autophosphorylated form interacts with RPS5. Interacts with FLS2. Post-translationally, cleaved by avrPphB in infected plant cells. Its cleavage serves as a signal that triggers the RPS5-mediated defense system. In terms of processing, autophosphorylates. Autophosphorylation may be required to trigger the RPS5-mediated plant defense system. Palmitoylation at Cys-3 and Cys-6 are required for plasma membrane location that is essential for the RPS5-mediated plant defense response.

It localises to the cell membrane. It catalyses the reaction L-seryl-[protein] + ATP = O-phospho-L-seryl-[protein] + ADP + H(+). The catalysed reaction is L-threonyl-[protein] + ATP = O-phospho-L-threonyl-[protein] + ADP + H(+). Its function is as follows. Protein kinase required for plant defense mechanism mediated by the disease resistance (R) protein RPS5. In case of infection by Pseudomonas syringae, AvrPphB triggers RPS5-mediated defense mechanism via the cleavage of PBS1. Both kinase activity and cleavage by avrPphB are independently required to trigger the RPS5-mediated resistance. Contributes to PAMP-triggered immunity (PTI) signaling and defense responses downstream of FLS2. The polypeptide is Serine/threonine-protein kinase PBS1 (Arabidopsis thaliana (Mouse-ear cress)).